We begin with the raw amino-acid sequence, 42 residues long: Beta-defensin 13 (42 aa).

Cystine bridges form between C9-C38, C16-C31, and C21-C39.

It belongs to the beta-defensin family. Neutrophilic granules.

The protein localises to the secreted. Has bactericidal activity. Active against E.coli ML35 and S.aureus 502A. The sequence is that of Beta-defensin 13 (DEFB13) from Bos taurus (Bovine).